The following is a 256-amino-acid chain: Type III pantothenate kinase (256 aa).

6-13 (DVGNTNTV) serves as a coordination point for ATP. Residues Tyr-100 and 107 to 110 (GADR) contribute to the substrate site. Asp-109 acts as the Proton acceptor in catalysis. Asp-129 contacts K(+). ATP is bound at residue Thr-132. Residue Thr-184 participates in substrate binding.

The protein belongs to the type III pantothenate kinase family. Homodimer. NH4(+) serves as cofactor. The cofactor is K(+).

It localises to the cytoplasm. The enzyme catalyses (R)-pantothenate + ATP = (R)-4'-phosphopantothenate + ADP + H(+). It functions in the pathway cofactor biosynthesis; coenzyme A biosynthesis; CoA from (R)-pantothenate: step 1/5. Functionally, catalyzes the phosphorylation of pantothenate (Pan), the first step in CoA biosynthesis. This Myxococcus xanthus (strain DK1622) protein is Type III pantothenate kinase.